The following is a 109-amino-acid chain: Nascent polypeptide-associated complex protein (109 aa).

In terms of domain architecture, NAC-A/B spans 3–69 (PMNPKQLKKL…TEEERVVLKI (67 aa)).

Belongs to the NAC-alpha family. As to quaternary structure, homodimer. Interacts with the ribosome. Binds ribosomal RNA.

Its function is as follows. Contacts the emerging nascent chain on the ribosome. The polypeptide is Nascent polypeptide-associated complex protein (Pyrococcus abyssi (strain GE5 / Orsay)).